We begin with the raw amino-acid sequence, 253 residues long: Ribosome-inactivating protein saporin-5 (253 aa).

Glu176 is a catalytic residue.

The protein belongs to the ribosome-inactivating protein family. Type 1 RIP subfamily.

It carries out the reaction Endohydrolysis of the N-glycosidic bond at one specific adenosine on the 28S rRNA.. Functionally, ribosome-inactivating protein of type 1, inhibits protein synthesis in animal cells. This chain is Ribosome-inactivating protein saporin-5 (SAP5), found in Saponaria officinalis (Common soapwort).